The sequence spans 509 residues: uncharacterized protein (509 aa).

It localises to the virion. This is an uncharacterized protein from Acanthamoeba polyphaga mimivirus (APMV).